The primary structure comprises 377 residues: Leucine aminopeptidase A (377 aa).

The first 18 residues, 1 to 18, serve as a signal peptide directing secretion; it reads MRFLPCIATLAATASALA. Residues 19-79 constitute a propeptide that is removed on maturation; it reads IGDHVRSDDQ…SNKKQKLAVT (61 aa). Asparagine 87 is a glycosylation site (N-linked (GlcNAc...) asparagine). Histidine 176, aspartate 195, glutamate 234, and aspartate 261 together coordinate Zn(2+). The N-linked (GlcNAc...) asparagine glycan is linked to asparagine 288. A disulfide bridge links cysteine 310 with cysteine 314. Histidine 343 provides a ligand contact to Zn(2+).

This sequence belongs to the peptidase M28 family. M28E subfamily. As to quaternary structure, monomer. Zn(2+) is required as a cofactor.

It is found in the secreted. Calcium, magnesium and manganese cations reduce peptidase activity to 20.3-51.3 percent. The metal ion chelating reagent EDTA almost completely inhibits activity. The protease inhibitor bacitracin and the aminopeptidase B inhibitor bestatin, as well as DTT and beta-mercaptoethanol act also as lap A inhibitorsD. Extracellular aminopeptidase that allows assimilation of proteinaceous substrates. In Aspergillus oryzae (strain ATCC 42149 / RIB 40) (Yellow koji mold), this protein is Leucine aminopeptidase A (lapA).